Consider the following 412-residue polypeptide: MANVADTKLYDILGVPPGASENELKKAYRKLAKEYHPDKNPNAGDKFKEISFAYEVLSNPEKRELYDRYGEQGLREGSGGGGGMDDIFSHIFGGGLFGFMGNQSRSRNGRRRGEDMMHPLKVSLEDLYNGKTTKLQLSKNVLCSACSGQGGKSGAVQKCSACRGRGVRIMIRQLAPGMVQQMQSVCSDCNGEGEVINEKDRCKKCEGKKVIKEVKILEVHVDKGMKHGQRITFTGEADQAPGVEPGDIVLLLQEKEHEVFQRDGNDLHMTYKIGLVEALCGFQFTFKHLDARQIVVKYPPGKVIEPGCVRVVRGEGMPQYRNPFEKGDLYIKFDVQFPENNWINPDKLSELEDLLPSRPEVPNVIGETEEVELQEFDSTRGSGGGQRREAYNDSSDEESSSHHGPGVQCAHQ.

One can recognise a J domain in the interval K8–G70. At K39 the chain carries N6-acetyllysine. 2 positions are modified to phosphoserine: S78 and S123. Residues G130–V214 form a CR-type zinc finger. K134 is covalently cross-linked (Glycyl lysine isopeptide (Lys-Gly) (interchain with G-Cter in SUMO2)). Residues C143 and C146 each contribute to the Zn(2+) site. A CXXCXGXG motif repeat occupies C143–G150. Position 152 is an N6-acetyllysine (K152). Residues C159, C162, C186, C189, C202, and C205 each coordinate Zn(2+). CXXCXGXG motif repeat units follow at residues C159 to G166, C186 to G193, and C202 to K209. Positions I365–Q412 are disordered. At Y391 the chain carries Phosphotyrosine. S394 and S395 each carry phosphoserine. C409 is modified (cysteine methyl ester). Residue C409 is the site of S-farnesyl cysteine attachment. Residues A410–Q412 constitute a propeptide, removed in mature form.

Its subcellular location is the membrane. Its function is as follows. Co-chaperone of Hsc70. Stimulates ATP hydrolysis and the folding of unfolded proteins mediated by HSPA1A/B (in vitro). The polypeptide is DnaJ homolog subfamily A member 2 (Dnaja2) (Mus musculus (Mouse)).